The primary structure comprises 402 residues: Zinc finger CCCH domain-containing protein 35 (402 aa).

2 consecutive C3H1-type zinc fingers follow at residues 117 to 144 (CYSGTACPDFRKGGCKRGDACEFAHGVF) and 152 to 176 (RYRTQPCKDGTACRRRVCFFAHTPD). 2 disordered regions span residues 180-211 (VLPPSQQQGSNSPRGCGGGGAGAAASPLAESY) and 232-258 (SSPTSTLVSPPRSPPSESPPLSPDAAG). Residues 183-192 (PSQQQGSNSP) are compositionally biased toward polar residues. Low complexity predominate over residues 232–241 (SSPTSTLVSP). A compositionally biased stretch (pro residues) spans 242-253 (PRSPPSESPPLS).

This is Zinc finger CCCH domain-containing protein 35 from Oryza sativa subsp. japonica (Rice).